Consider the following 447-residue polypeptide: Probable alpha-galactosidase B (447 aa).

A signal peptide spans 1–22; sequence MTTFLSLTTAAAVLTLARGSNA. Disulfide bonds link cysteine 45/cysteine 77 and cysteine 127/cysteine 157. Aspartate 155 (nucleophile) is an active-site residue. Asparagine 162 and asparagine 180 each carry an N-linked (GlcNAc...) asparagine glycan. Residue 225 to 229 coordinates substrate; it reads NWGQA. An N-linked (GlcNAc...) asparagine glycan is attached at asparagine 236. The active-site Proton donor is aspartate 247. Asparagine 286 is a glycosylation site (N-linked (GlcNAc...) asparagine).

The protein belongs to the glycosyl hydrolase 27 family.

The protein resides in the secreted. The catalysed reaction is Hydrolysis of terminal, non-reducing alpha-D-galactose residues in alpha-D-galactosides, including galactose oligosaccharides, galactomannans and galactolipids.. Its function is as follows. Hydrolyzes a variety of simple alpha-D-galactoside as well as more complex molecules such as oligosaccharides and polysaccharides. This is Probable alpha-galactosidase B (aglB) from Neosartorya fischeri (strain ATCC 1020 / DSM 3700 / CBS 544.65 / FGSC A1164 / JCM 1740 / NRRL 181 / WB 181) (Aspergillus fischerianus).